The following is a 331-amino-acid chain: Dioxygenase swnH2 (331 aa).

Residues 1 to 11 show a composition bias toward polar residues; the sequence is MINSDAQSAQK. A disordered region spans residues 1–31; it reads MINSDAQSAQKQVEVEKPDEKYSAPRLLPPI. A compositionally biased stretch (basic and acidic residues) spans 13-23; sequence VEVEKPDEKYS. Positions 173, 175, and 250 each coordinate Fe cation.

It belongs to the PhyH family. As to quaternary structure, homodimer. Fe cation is required as a cofactor.

Its pathway is mycotoxin biosynthesis. Its function is as follows. Dioxygenase; part of the gene cluster that mediates the biosynthesis of swainsonine (SW), a cytotoxic fungal alkaloid and a potential cancer therapy drug. Swainsonine production occurs via a multibranched pathway and is dispensable for fungal colonization of plants and infection of insect hosts. The first step of swainsonine biosynthesis is the production of the precursor pipecolic acid (PA) via conversion of L-lysine (Lys) to 1-piperideine-6-carboxylate (P6C) by the aminotransferase swnA, the latter being further reduced to PA by the reductase swnR. PA can be converted from lysine by both the SW biosynthetic cluster and the unclustered genes such as lysine cyclodeaminase. The PKS-NRPS hybrid synthetase swnK uptakes and condensates PA and malonyl-CoA with and without skipping of the ketoreductase (KR) domain in order to produce 3 intermediates, 1-oxoindolizidine, (1S)-1-hydroxyindolizin, and (1R)-1-hydroxyindolizine; with the transisomer (1S)-1-hydroxyindolizin being predominant. The terminal thioester reductase (TE) domain of swnK is involved in reduction of the thioester bond to release the intermediate aldehydes. The oxidoreductase swnN could contribute to the reduction of 1-oxoindolizidine to (1S)-1-hydroxyindolizin and (1R)-1-hydroxyindolizine, contributing to the major route of SW production. The dioxygenase swnH2 would be responsible for the oxidization of (1R)-1-hydroxyindolizine into (1R,2S)-1,2-dihydroxyindolizine and of (1S)-1-hydroxyindolizin to yield both (1R,2S)-1,2-dihydroxyindolizine and (1S,2S)-1,2-dihydroxyindolizine. The dioxygenase swnH1 then performs the conversion of the 1,2-dihydroxyindolizine epimers to SW. The sequence is that of Dioxygenase swnH2 from Metarhizium robertsii (strain ARSEF 23 / ATCC MYA-3075) (Metarhizium anisopliae (strain ARSEF 23)).